We begin with the raw amino-acid sequence, 372 residues long: Probable L-tyrosine/L-aspartate decarboxylase (372 aa).

Residue K215 is modified to N6-(pyridoxal phosphate)lysine.

The protein belongs to the group II decarboxylase family. MfnA subfamily. Pyridoxal 5'-phosphate is required as a cofactor.

It catalyses the reaction L-tyrosine + H(+) = tyramine + CO2. The catalysed reaction is L-aspartate + H(+) = beta-alanine + CO2. It functions in the pathway cofactor biosynthesis; methanofuran biosynthesis. It participates in cofactor biosynthesis; coenzyme A biosynthesis. Its function is as follows. Catalyzes the decarboxylation of L-tyrosine to produce tyramine for methanofuran biosynthesis. Can also catalyze the decarboxylation of L-aspartate to produce beta-alanine for coenzyme A (CoA) biosynthesis. This chain is Probable L-tyrosine/L-aspartate decarboxylase, found in Methanopyrus kandleri (strain AV19 / DSM 6324 / JCM 9639 / NBRC 100938).